We begin with the raw amino-acid sequence, 332 residues long: D-alanine--D-alanine ligase (332 aa).

Residues 124-329 (KMWFSALNIP…FPDYLLSNIN (206 aa)) enclose the ATP-grasp domain. 154-209 (ALVNWGSIFVKAASQGSSVGCYRIDNQEDVASTLAQAFTYSDYVIVEKTISARELE) provides a ligand contact to ATP. Mg(2+) is bound by residues Asp-283, Glu-296, and Asn-298.

This sequence belongs to the D-alanine--D-alanine ligase family. The cofactor is Mg(2+). It depends on Mn(2+) as a cofactor.

The protein localises to the cytoplasm. The catalysed reaction is 2 D-alanine + ATP = D-alanyl-D-alanine + ADP + phosphate + H(+). Its pathway is cell wall biogenesis; peptidoglycan biosynthesis. Cell wall formation. The polypeptide is D-alanine--D-alanine ligase (Shewanella piezotolerans (strain WP3 / JCM 13877)).